The sequence spans 360 residues: Peptide chain release factor 1 (360 aa).

Q235 carries the post-translational modification N5-methylglutamine. The segment at 285-313 is disordered; it reads KRQQAEASTRRNLLGSGDRSDRNRTYNFP.

Belongs to the prokaryotic/mitochondrial release factor family. Post-translationally, methylated by PrmC. Methylation increases the termination efficiency of RF1.

The protein localises to the cytoplasm. Functionally, peptide chain release factor 1 directs the termination of translation in response to the peptide chain termination codons UAG and UAA. The chain is Peptide chain release factor 1 from Klebsiella pneumoniae (strain 342).